A 272-amino-acid chain; its full sequence is Tryptophan synthase alpha chain (272 aa).

Catalysis depends on proton acceptor residues Glu-53 and Asp-64.

It belongs to the TrpA family. As to quaternary structure, tetramer of two alpha and two beta chains.

It carries out the reaction (1S,2R)-1-C-(indol-3-yl)glycerol 3-phosphate + L-serine = D-glyceraldehyde 3-phosphate + L-tryptophan + H2O. It participates in amino-acid biosynthesis; L-tryptophan biosynthesis; L-tryptophan from chorismate: step 5/5. Functionally, the alpha subunit is responsible for the aldol cleavage of indoleglycerol phosphate to indole and glyceraldehyde 3-phosphate. The sequence is that of Tryptophan synthase alpha chain from Xanthomonas campestris pv. campestris (strain B100).